We begin with the raw amino-acid sequence, 128 residues long: Small ribosomal subunit protein uS12 (128 aa).

Residue Asp-89 is modified to 3-methylthioaspartic acid.

It belongs to the universal ribosomal protein uS12 family. As to quaternary structure, part of the 30S ribosomal subunit. Contacts proteins S8 and S17. May interact with IF1 in the 30S initiation complex.

With S4 and S5 plays an important role in translational accuracy. In terms of biological role, interacts with and stabilizes bases of the 16S rRNA that are involved in tRNA selection in the A site and with the mRNA backbone. Located at the interface of the 30S and 50S subunits, it traverses the body of the 30S subunit contacting proteins on the other side and probably holding the rRNA structure together. The combined cluster of proteins S8, S12 and S17 appears to hold together the shoulder and platform of the 30S subunit. The sequence is that of Small ribosomal subunit protein uS12 from Campylobacter jejuni subsp. doylei (strain ATCC BAA-1458 / RM4099 / 269.97).